Here is a 506-residue protein sequence, read N- to C-terminus: Probable malate:quinone oxidoreductase (506 aa).

The protein belongs to the MQO family. It depends on FAD as a cofactor.

The catalysed reaction is (S)-malate + a quinone = a quinol + oxaloacetate. Its pathway is carbohydrate metabolism; tricarboxylic acid cycle; oxaloacetate from (S)-malate (quinone route): step 1/1. The chain is Probable malate:quinone oxidoreductase from Rhodococcus jostii (strain RHA1).